Consider the following 303-residue polypeptide: Protein SULFUR DEFICIENCY-INDUCED 2 (303 aa).

Residues 62–89 (RVDSALKDMALLMKQQNRAEEAIDAIQS) are a coiled coil. TPR repeat units follow at residues 64 to 97 (DSAL…CSRQ), 100 to 133 (ESLD…IYQG), 160 to 193 (SRIL…EPDA), and 195 to 226 (KACN…ENKE). The stretch at 232–253 (RLMARVQELLSELKPQEEEAAA) forms a coiled coil.

It belongs to the MS5 protein family.

It localises to the nucleus. In terms of biological role, involved in the utilization of stored sulfate under sulfur-deficient conditions. The protein is Protein SULFUR DEFICIENCY-INDUCED 2 of Arabidopsis thaliana (Mouse-ear cress).